A 428-amino-acid polypeptide reads, in one-letter code: D-inositol 3-phosphate glycosyltransferase (428 aa).

Histidine 5 contacts 1D-myo-inositol 3-phosphate. UDP-N-acetyl-alpha-D-glucosamine-binding positions include 11-12 (QP) and glycine 19. Residues 16 to 21 (DAGGMN), lysine 74, tyrosine 107, threonine 131, and arginine 151 contribute to the 1D-myo-inositol 3-phosphate site. 3 residues coordinate UDP-N-acetyl-alpha-D-glucosamine: arginine 225, lysine 230, and glutamine 283. Mg(2+) contacts are provided by phenylalanine 292, glutamine 293, and alanine 295. Positions 305 and 313 each coordinate UDP-N-acetyl-alpha-D-glucosamine. Threonine 319 is a binding site for Mg(2+).

The protein belongs to the glycosyltransferase group 1 family. MshA subfamily. In terms of assembly, homodimer.

It carries out the reaction 1D-myo-inositol 3-phosphate + UDP-N-acetyl-alpha-D-glucosamine = 1D-myo-inositol 2-acetamido-2-deoxy-alpha-D-glucopyranoside 3-phosphate + UDP + H(+). Its function is as follows. Catalyzes the transfer of a N-acetyl-glucosamine moiety to 1D-myo-inositol 3-phosphate to produce 1D-myo-inositol 2-acetamido-2-deoxy-glucopyranoside 3-phosphate in the mycothiol biosynthesis pathway. In Mycobacterium leprae (strain Br4923), this protein is D-inositol 3-phosphate glycosyltransferase.